A 1112-amino-acid chain; its full sequence is Electrogenic sodium bicarbonate cotransporter 4 (1112 aa).

A compositionally biased stretch (basic and acidic residues) spans 1–13; it reads MKVEEKAGVKKLE. Disordered regions lie at residues 1–80, 220–255, and 439–469; these read MKVE…SSLG, KKPI…HHST, and GRSG…NEAE. The Cytoplasmic segment spans residues 1–513; that stretch reads MKVEEKAGVK…DFYDGFHIQS (513 aa). 2 stretches are compositionally biased toward polar residues: residues 53–67 and 233–244; these read QRVQ…SQQD and SVSTTNRSSARS. Over residues 444–465 the composition is skewed to gly residues; the sequence is SAGGGGSGGGAGGSGAGGGGSG. A helical membrane pass occupies residues 514 to 536; that stretch reads ISAVLFIYLGCITNAITFGGLLG. Over 537–547 the chain is Extracellular; sequence DATDNYQGVME. Residues 548–579 form a helical membrane-spanning segment; sequence SFLGTAMAGSLFCLFSGQPLIILSSTGPILIF. Residues 580-598 lie on the Cytoplasmic side of the membrane; sequence EKLLFDFSKANGLDYMEFR. The chain crosses the membrane as a helical span at residues 599 to 620; that stretch reads LWIGLHSAIQCLILVATDASFI. Residues 621–734 are Extracellular-facing; that stretch reads IKYITRFTEE…LGSSCQFVPD (114 aa). The helical transmembrane segment at 735 to 753 threads the bilayer; the sequence is LALMSFILFFGTYSMTLTL. The Cytoplasmic segment spans residues 754 to 772; sequence KKFKFSRYFPTKVRTLVAD. Residues 773–792 form a helical membrane-spanning segment; sequence FSIVFSILLFCGIDACFGLQ. At 793–820 the chain is on the extracellular side; that stretch reads TPKLHVPNVIKPTRPDRGWFVAPFGKNP. A helical transmembrane segment spans residues 821 to 839; it reads WWVYPASILPALLVTILIF. Over 840 to 858 the chain is Cytoplasmic; the sequence is MDQQITAVIVNRKENKLRK. Residues 859 to 875 traverse the membrane as a helical segment; it reads AAGYHLDLFWVGILMAL. Topologically, residues 876 to 880 are extracellular; it reads CSFMG. The chain crosses the membrane as a helical span at residues 881-900; the sequence is LPWYVAATVISIAHIDSLKM. Residues 901–920 are Cytoplasmic-facing; the sequence is ETETSAPGEQPQFLGVREQR. A helical transmembrane segment spans residues 921–940; sequence VTGVMVFILTGISVFLAPIL. The Extracellular segment spans residues 941–945; the sequence is KYIPM. The helical transmembrane segment at 946–966 threads the bilayer; that stretch reads PVLYGVFLYMGVASLNGIQFW. Residues 967–992 lie on the Cytoplasmic side of the membrane; that stretch reads DRCKLFLMPAKHQPDHAFLRHVPLRR. Residues 993 to 1010 traverse the membrane as a helical segment; sequence IHLFTLVQILCLALLWIL. Topologically, residues 1011–1015 are extracellular; sequence KSTMA. The chain crosses the membrane as a helical span at residues 1016–1033; sequence AIIFPVMILGLIIVRRLL. The Cytoplasmic portion of the chain corresponds to 1034 to 1112; it reads DLIFSQHDLA…KRSSSWSHSL (79 aa). Basic and acidic residues predominate over residues 1055 to 1074; the sequence is KESDRKKRRKEVHENTDKEP. Residues 1055-1112 form a disordered region; it reads KESDRKKRRKEVHENTDKEPQFLPPSVVKIPMEGIPSDPQNGIHCVGRKRSSSWSHSL.

It belongs to the anion exchanger (TC 2.A.31) family. As to expression, observed in hepatocytes and in the apical region of bile duct intrahepatic cholangiocytes of liver. Also observed in uroepithelium cells lining the outer pelvic wall of the kidney (at protein level). Highly expressed in colon, distal colon, liver, kidney and testis. Moderate expression in duodenum and stomach and weak expression in heart. In kidney, very weakly expressed in the inner medulla, but abundantly expressed in cortex and outer medulla in the medullary thick ascending and cortical thick ascending limbs of the loop of Henle.

The protein resides in the basolateral cell membrane. The protein localises to the apical cell membrane. It carries out the reaction 2 hydrogencarbonate(out) + Na(+)(out) = 2 hydrogencarbonate(in) + Na(+)(in). It catalyses the reaction 3 hydrogencarbonate(out) + Na(+)(out) = 3 hydrogencarbonate(in) + Na(+)(in). Functionally, mediates sodium- and bicarbonate-dependent electrogenic sodium bicarbonate cotransport, with a Na(+):HCO3(-) stoichiometry varying from 1:2 to 1:3. In Rattus norvegicus (Rat), this protein is Electrogenic sodium bicarbonate cotransporter 4.